Reading from the N-terminus, the 311-residue chain is Transcription initiation factor IIB (311 aa).

A TFIIB-type zinc finger spans residues 11-42 (KETKCPECGSTKLINDHERGEVVCGACGLVID). 4 residues coordinate Zn(2+): Cys15, Cys18, Cys34, and Cys37. Repeat copies occupy residues 128–211 (SELD…TREL) and 222–303 (DYVP…ELTE).

The protein belongs to the TFIIB family.

Functionally, stabilizes TBP binding to an archaeal box-A promoter. Also responsible for recruiting RNA polymerase II to the pre-initiation complex (DNA-TBP-TFIIB). The protein is Transcription initiation factor IIB of Methanosphaera stadtmanae (strain ATCC 43021 / DSM 3091 / JCM 11832 / MCB-3).